The primary structure comprises 396 residues: MGKAKFERNKPHVNIGTIGHVDHGKTTLTAAITITLAKTGGATAKNYADIDAAPEEKARGITINTAHVEYETPARHYAHVDCPGHADYVKNMITGAAQMDGAILVCSAADGPMPQTREHILLARQVGVPALVVFLNKVDMVDDEELLELVEMEVRELLSSYNFPGDDIPIIKGSALAAVEDRNPEIGQERILELMAAVDEYIPTPERPLDKPFLMPVEDVFSISGRGTVVTGRVEQGIVKVGEEIEIVGIRPTVKTTCTGVEMFRKLLDQGQAGDNIGALLRGVDREGVERGQVLCKPGSITPHTLFEAEAYILTKEEGGRHTPFFTNYRPQFYFRTTDVTGIVKLPEDKEMVLPGDNVKMDVELINPIAMDKGLRFAIREGGRTVGAGVVSEIKK.

A tr-type G domain is found at 10–206; it reads KPHVNIGTIG…AVDEYIPTPE (197 aa). Positions 19–26 are G1; the sequence is GHVDHGKT. 19 to 26 contributes to the GTP binding site; sequence GHVDHGKT. Thr26 serves as a coordination point for Mg(2+). The G2 stretch occupies residues 60–64; sequence GITIN. The segment at 81–84 is G3; sequence DCPG. GTP is bound by residues 81 to 85 and 136 to 139; these read DCPGH and NKVD. Residues 136 to 139 are G4; sequence NKVD. The segment at 174 to 176 is G5; it reads SAL.

It belongs to the TRAFAC class translation factor GTPase superfamily. Classic translation factor GTPase family. EF-Tu/EF-1A subfamily. As to quaternary structure, monomer.

The protein resides in the cytoplasm. The catalysed reaction is GTP + H2O = GDP + phosphate + H(+). In terms of biological role, GTP hydrolase that promotes the GTP-dependent binding of aminoacyl-tRNA to the A-site of ribosomes during protein biosynthesis. The sequence is that of Elongation factor Tu 1 from Hyphomonas neptunium (strain ATCC 15444).